A 572-amino-acid polypeptide reads, in one-letter code: MLRSSVVRSRATLRPLLRRAYSSHKELKFGVEGRASLLKGVETLAEAVAATLGPKGRNVLIEQPFGPPKITKDGVTVAKSIVLKDKFENMGAKLLQEVASKTNEAAGDGTTSATVLGRAIFTESVKNVAAGCNPMDLRRGSQVAVEKVIEFLSANKKEITTSEEIAQVATISANGDSHVGKLLASAMEKVGKEGVITIREGRTLEDELEVTEGMRFDRGFISPYFITDPKSSKVEFEKPLLLLSEKKISSIQDILPALEISNQSRRPLLIIAEDVDGEALAACILNKLRGQVKVCAVKAPGFGDNRKNTIGDIAVLTGGTVFTEELDLKPEQCTIENLGSCDSITVTKEDTVILNGSGPKEAIQERIEQIKGSIDITTTNSYEKEKLQERLAKLSGGVAVIRVGGASEVEVGEKKDRYDDALNATRAAVEEGILPGGGTALVKASRVLDEVVVDNFDQKLGVDIIRKAITRPAKQIIENAGEEGSVIIGKLIDEYGDDFAKGYDASKSEYTDMLATGIIDPFKVVRSGLVDASGVASLLATTEVAIVDAPEPPAAAGAGGMPGGMPGMPGMM.

Residues 1-25 (MLRSSVVRSRATLRPLLRRAYSSHK) constitute a mitochondrion transit peptide. Position 102 is a phosphothreonine (Thr-102). Residue Ser-485 is modified to Phosphoserine.

It belongs to the chaperonin (HSP60) family.

Its subcellular location is the mitochondrion matrix. Functionally, may participate in assembly and/or disassembly of proteins imported into the mitochondrion. HSP60 are ATPases and have affinity for unfolded proteins. This is Heat shock protein 60, mitochondrial (HSP60) from Saccharomyces cerevisiae (strain ATCC 204508 / S288c) (Baker's yeast).